The chain runs to 424 residues: Tol-Pal system protein TolB (424 aa).

A signal peptide spans 1–16 (MKQLLVLILSLYTTLA).

This sequence belongs to the TolB family. The Tol-Pal system is composed of five core proteins: the inner membrane proteins TolA, TolQ and TolR, the periplasmic protein TolB and the outer membrane protein Pal. They form a network linking the inner and outer membranes and the peptidoglycan layer.

The protein localises to the periplasm. Its function is as follows. Part of the Tol-Pal system, which plays a role in outer membrane invagination during cell division and is important for maintaining outer membrane integrity. The chain is Tol-Pal system protein TolB from Ruthia magnifica subsp. Calyptogena magnifica.